Consider the following 366-residue polypeptide: 3-dehydroquinate synthase (366 aa).

NAD(+)-binding positions include 69–74 (DGEAHK), 103–107 (GVIGD), 127–128 (TT), Lys140, Lys149, and 167–170 (TLNT). Zn(2+) is bound by residues Glu182, His245, and His262.

This sequence belongs to the sugar phosphate cyclases superfamily. Dehydroquinate synthase family. It depends on Co(2+) as a cofactor. The cofactor is Zn(2+). NAD(+) is required as a cofactor.

It localises to the cytoplasm. It carries out the reaction 7-phospho-2-dehydro-3-deoxy-D-arabino-heptonate = 3-dehydroquinate + phosphate. It functions in the pathway metabolic intermediate biosynthesis; chorismate biosynthesis; chorismate from D-erythrose 4-phosphate and phosphoenolpyruvate: step 2/7. Catalyzes the conversion of 3-deoxy-D-arabino-heptulosonate 7-phosphate (DAHP) to dehydroquinate (DHQ). This is 3-dehydroquinate synthase from Pseudomonas fluorescens (strain SBW25).